Here is a 92-residue protein sequence, read N- to C-terminus: YcgL domain-containing protein PBPRA1080 (92 aa).

Residues 1-84 form the YcgL domain; sequence MLCSIYKSSK…PVTNLLHQYK (84 aa).

This is YcgL domain-containing protein PBPRA1080 from Photobacterium profundum (strain SS9).